We begin with the raw amino-acid sequence, 453 residues long: MPDNNTEQLQGSPSSDQRLRVDWDNGNHFDVSPDRYAPHLSEFYPIVNSKRPVASSAGSENNDHLDDMNHLRSSKVYSKARRASSITSGTSTINDLQTLITKRDVKETQEALSTLLRNSNAYSDSLLKTSQNGAEIAHSLENIAKLKGCNDETAEKLLSASGLFYLLSNHQLIMSKYFNDLLGDNLIDDIDEFELQTKIMENKFKAQSKEQSLKLKLQERHNFDISKRKIRNLISYRESLSSLQARLDQLETLKHDFYMDSYELVENTCNKVLSKVATVSRAQVEISENIARKGWSGGGLDELLCDADDPFSKKADGPYGTIGGDGETAGEAYNSDEETGGNDVVLNELLEGTSQPSTSKTSLPKSKGSSTVSTPNHSQSSSNKDGVRNNGGGKNGEDEDTDNLMGTENSFSLPPTRNSAEETTQTFKQLSIKEDNDNHSSDTDGMQDQSSNI.

The segment covering 1-16 has biased composition (polar residues); that stretch reads MPDNNTEQLQGSPSSD. Residues 1-20 form a disordered region; sequence MPDNNTEQLQGSPSSDQRLR. 3 positions are modified to phosphoserine: S59, S84, and S85. Coiled-coil stretches lie at residues 102–122 and 230–257; these read KRDV…SNAY and IRNL…KHDF. Disordered regions lie at residues 316-340 and 353-453; these read DGPY…EETG and TSQP…SSNI. Position 335 is a phosphoserine (S335). Over residues 353-371 the composition is skewed to low complexity; the sequence is TSQPSTSKTSLPKSKGSST. Polar residues-rich tracts occupy residues 372-384 and 404-429; these read VSTP…SSNK and LMGT…TFKQ. Residues 431-442 are compositionally biased toward basic and acidic residues; that stretch reads SIKEDNDNHSSD. The segment covering 443-453 has biased composition (polar residues); it reads TDGMQDQSSNI.

Homomultimer. Interacts with YPT7 and VPS33.

The protein resides in the vacuole membrane. In terms of biological role, may be required for vacuolar fusion. Overexpression leads to fragmentation of vacuoles, missorting of the vacuolar enzyme carboxypeptidase Y (CPY) to the exterior of the cell and accumulation of multivesicular bodies inside the cell. The protein is Protein IVY1 (IVY1) of Saccharomyces cerevisiae (strain ATCC 204508 / S288c) (Baker's yeast).